A 386-amino-acid chain; its full sequence is Succinate--CoA ligase [ADP-forming] subunit beta (386 aa).

The 236-residue stretch at 9–244 (KDILRQFGVP…LDEEDPAEVE (236 aa)) folds into the ATP-grasp domain. Residues lysine 46, 53 to 55 (GRG), glutamate 99, alanine 102, and glutamate 107 contribute to the ATP site. Positions 199 and 213 each coordinate Mg(2+). Residues asparagine 264 and 321-323 (GIM) each bind substrate.

The protein belongs to the succinate/malate CoA ligase beta subunit family. As to quaternary structure, heterotetramer of two alpha and two beta subunits. It depends on Mg(2+) as a cofactor.

The enzyme catalyses succinate + ATP + CoA = succinyl-CoA + ADP + phosphate. The catalysed reaction is GTP + succinate + CoA = succinyl-CoA + GDP + phosphate. Its pathway is carbohydrate metabolism; tricarboxylic acid cycle; succinate from succinyl-CoA (ligase route): step 1/1. Succinyl-CoA synthetase functions in the citric acid cycle (TCA), coupling the hydrolysis of succinyl-CoA to the synthesis of either ATP or GTP and thus represents the only step of substrate-level phosphorylation in the TCA. The beta subunit provides nucleotide specificity of the enzyme and binds the substrate succinate, while the binding sites for coenzyme A and phosphate are found in the alpha subunit. This is Succinate--CoA ligase [ADP-forming] subunit beta from Delftia acidovorans (strain DSM 14801 / SPH-1).